Consider the following 477-residue polypeptide: Protein U33 (477 aa).

This sequence belongs to the herpesviridae UL49 family.

The chain is Protein U33 (U33) from Homo sapiens (Human).